The chain runs to 1220 residues: von Willebrand factor A domain-containing protein 5B1 (1220 aa).

The signal sequence occupies residues 1-18 (MPGLLNWITGAALPLTAS). The VIT domain occupies 19-149 (DVTSCVSGYA…NVTIFISTSS (131 aa)). The N-linked (GlcNAc...) asparagine glycan is linked to N140. Residues 361–529 (EFIFLIDRSS…RLQPKMVKSL (169 aa)) form the VWFA domain. N-linked (GlcNAc...) asparagine glycosylation occurs at N650. The segment at 715–807 (NSGQDLNQGP…SPSRPATPAP (93 aa)) is disordered. Positions 757-774 (VRERTSDSRSPGDLEPSH) are enriched in basic and acidic residues. Residues 796–807 (RASPSRPATPAP) are compositionally biased toward low complexity. Y881 carries the phosphotyrosine modification. Disordered regions lie at residues 937-962 (RGTSSGFGRPQTMLGEDSAPGNGKFQ) and 976-995 (EARSPGREKHGASEGPQRSL). Residue N1017 is glycosylated (N-linked (GlcNAc...) asparagine). Positions 1093–1111 (TTRPSESKTPSPQLCTSSP) are enriched in polar residues. Positions 1093–1115 (TTRPSESKTPSPQLCTSSPPRHP) are disordered.

It is found in the secreted. The protein is von Willebrand factor A domain-containing protein 5B1 (VWA5B1) of Homo sapiens (Human).